A 122-amino-acid chain; its full sequence is Large ribosomal subunit protein bL12 (122 aa).

It belongs to the bacterial ribosomal protein bL12 family. Homodimer. Part of the ribosomal stalk of the 50S ribosomal subunit. Forms a multimeric L10(L12)X complex, where L10 forms an elongated spine to which 2 to 4 L12 dimers bind in a sequential fashion. Binds GTP-bound translation factors.

Forms part of the ribosomal stalk which helps the ribosome interact with GTP-bound translation factors. Is thus essential for accurate translation. The sequence is that of Large ribosomal subunit protein bL12 from Shewanella putrefaciens (strain CN-32 / ATCC BAA-453).